Here is a 250-residue protein sequence, read N- to C-terminus: Probable xyloglucan-specific endo-beta-1,4-glucanase A (250 aa).

Residues 1–19 (MKLSVLSLASLASAAALNA) form the signal peptide. Asparagine 72 is a glycosylation site (N-linked (GlcNAc...) asparagine).

The protein belongs to the glycosyl hydrolase 12 (cellulase H) family.

The protein resides in the secreted. It catalyses the reaction xyloglucan + H2O = xyloglucan oligosaccharides.. Catalyzes endohydrolysis of 1,4-beta-D-glucosidic linkages in xyloglucan with retention of the beta-configuration of the glycosyl residues. Specific for xyloglucan and does not hydrolyze other cell wall components. The protein is Probable xyloglucan-specific endo-beta-1,4-glucanase A (xgeA) of Aspergillus terreus (strain NIH 2624 / FGSC A1156).